Here is a 180-residue protein sequence, read N- to C-terminus: ADP-ribosylation factor 4 (180 aa).

Glycine 2 carries the N-myristoyl glycine lipid modification. GTP-binding positions include 24–31 (GLDAAGKT), 67–71 (DVGGQ), and 126–129 (NKQD). A Phosphoserine modification is found at serine 147.

Belongs to the small GTPase superfamily. Arf family. As to quaternary structure, forms a complex containing RAB11A, ASAP1, RAB3IP, RAP11FIP3 and ARF4; the complex promotes preciliary trafficking; the complex binds to RHO in photoreceptor cells and promotes RHO ciliary transport.

Its subcellular location is the golgi apparatus. The protein resides in the membrane. GTP-binding protein that functions as an allosteric activator of the cholera toxin catalytic subunit, an ADP-ribosyltransferase. Involved in protein trafficking; may modulate vesicle budding and uncoating within the Golgi apparatus. Part of the ciliary targeting complex containing Rab11, ASAP1, Rabin8/RAB3IP, RAB11FIP3 and ARF4, which direct preciliary vesicle trafficking to mother centriole and ciliogenesis initiation. This is ADP-ribosylation factor 4 (ARF4) from Bos taurus (Bovine).